Consider the following 249-residue polypeptide: Triosephosphate isomerase (249 aa).

Positions 12 and 14 each coordinate substrate. N6-acetyllysine is present on Lys14. At Tyr68 the chain carries 3'-nitrotyrosine. Ser80 bears the Phosphoserine mark. The active-site Electrophile is His96. The residue at position 106 (Ser106) is a Phosphoserine. Lys142 is covalently cross-linked (Glycyl lysine isopeptide (Lys-Gly) (interchain with G-Cter in SUMO1)). At Lys149 the chain carries N6-succinyllysine. N6-acetyllysine; alternate is present on Lys156. Position 156 is an N6-succinyllysine; alternate (Lys156). At Ser159 the chain carries Phosphoserine. The active-site Proton acceptor is Glu166. At Thr173 the chain carries Phosphothreonine. An N6-acetyllysine; alternate modification is found at Lys194. Lys194 carries the post-translational modification N6-succinyllysine; alternate. The residue at position 194 (Lys194) is an N6-methyllysine; alternate. Ser198 is subject to Phosphoserine. Residue Tyr209 is modified to 3'-nitrotyrosine. Ser212 is modified (phosphoserine). Thr214 is subject to Phosphothreonine. Ser223 carries the post-translational modification Phosphoserine. Lys238 bears the N6-acetyllysine mark.

It belongs to the triosephosphate isomerase family. As to quaternary structure, homodimer.

The protein localises to the cytoplasm. It carries out the reaction dihydroxyacetone phosphate = methylglyoxal + phosphate. The catalysed reaction is D-glyceraldehyde 3-phosphate = dihydroxyacetone phosphate. It participates in carbohydrate degradation; glycolysis; D-glyceraldehyde 3-phosphate from glycerone phosphate: step 1/1. Its pathway is carbohydrate biosynthesis; gluconeogenesis. In terms of biological role, triosephosphate isomerase is an extremely efficient metabolic enzyme that catalyzes the interconversion between dihydroxyacetone phosphate (DHAP) and D-glyceraldehyde-3-phosphate (G3P) in glycolysis and gluconeogenesis. Its function is as follows. It is also responsible for the non-negligible production of methylglyoxal a reactive cytotoxic side-product that modifies and can alter proteins, DNA and lipids. This chain is Triosephosphate isomerase (TPI1), found in Gorilla gorilla gorilla (Western lowland gorilla).